A 159-amino-acid polypeptide reads, in one-letter code: Transcription elongation factor A protein-like 1 (159 aa).

The disordered stretch occupies residues 1–97 (MDKPRKENEE…PPCGVGKHKL (97 aa)). Residues 17-34 (KTDEERPPVEHSPEKQSP) are compositionally biased toward basic and acidic residues. 6 positions are modified to phosphoserine: Ser-28, Ser-33, Ser-38, Ser-39, Ser-43, and Ser-44. Over residues 37-54 (QSSEEQSSEEEFFPEELL) the composition is skewed to acidic residues. The segment covering 64–80 (SEERPPQEGLSRKDLFE) has biased composition (basic and acidic residues).

The protein belongs to the TFS-II family. TFA subfamily. Post-translationally, phosphorylation of Ser-38 and Ser-39 is critical for transcriptional repression. In terms of tissue distribution, expressed in all tissues examined. Highly expressed in heart, ovary, prostate and skeletal muscle. Moderately expressed in brain, placenta, testis and small intestine. Weakly expressed in lung, liver and spleen. Expressed in several cancer cell lines.

The protein resides in the nucleus. May be involved in transcriptional regulation. Modulates various viral and cellular promoters in a promoter context-dependent manner. For example, transcription from the FOS promoter is increased, while Rous sarcoma virus (RSV) long terminal repeat (LTR) promoter activity is repressed. Does not bind DNA directly. This chain is Transcription elongation factor A protein-like 1, found in Homo sapiens (Human).